The primary structure comprises 292 residues: Polyketide transferase af380 (292 aa).

The segment at 46–267 is abhydrolase domain; it reads DVAVWFQQQG…FDLVAGRGHM (222 aa).

This sequence belongs to the polyketide transferase af380 family.

It catalyses the reaction fumagillol + dodecapentaneoyl-[polyketide synthase] = prefumagillin + holo-[polyketide synthase]. It participates in secondary metabolite biosynthesis; terpenoid biosynthesis. Functionally, polyketide transferase; part of the gene cluster that mediates the biosynthesis of fumagillin, a meroterpenoid that has numerous biological activities including irreversible inhibition of human type 2 methionine aminopeptidase (METAP2). Within the pathway, the polyketide transferase af380 catalyzes the transfer of a dodecapentaenoyl group synthesized by the polyketide synthase af370 onto 5R-hydroxy-seco-sesquiterpene to produce prefumagillin. The pathway begins with the conversion of farnesyl pyrophosphate (FPP) to beta-trans-bergamotene by the membrane-bound beta-trans-bergamotene synthase af520. The multifunctional cytochrome P450 monooxygenase af510 then converts beta-trans-bergamotene into 5-keto-demethoxyfumagillol via several oxydation steps. 5-keto-demethoxyfumagillol is then subjected to successive C-6 hydroxylation and O-methylation by the dioxygenase af480 and O-methyltransferase af390-400, respectively, to yield 5-keto-fumagillol, which is then stereoselectively reduced by the keto-reductase af490 to 5R-hydroxy-seco-sesquiterpene. The next step is the polyketide transferase af380-catalyzed transfer of a dodecapentaenoyl group synthesized by the polyketide synthase af370 onto 5R-hydroxy-seco-sesquiterpene which leads to the production of prefumagillin. Finally, oxidative cleavage by the monooxygenase af470 converts prefumagillin to fumagillin. The protein is Polyketide transferase af380 of Aspergillus fumigatus (strain ATCC MYA-4609 / CBS 101355 / FGSC A1100 / Af293) (Neosartorya fumigata).